Here is a 116-residue protein sequence, read N- to C-terminus: MVNPDKTSRVYCKYTCCGYVGSLDHDKQDAHVCKLGCQLFYGESCYKEMSNALNGTSRPIFLLSVPAIEVAQLQTLGEMSLKFLIKLIVKMTDCPRQSFSCSELITVLPTVQKLTF.

This is an uncharacterized protein from Schizosaccharomyces pombe (strain 972 / ATCC 24843) (Fission yeast).